The primary structure comprises 570 residues: MSEKHPGPLVVEGKLTDAERMKLESNYLRGTIAEDLNDGLTGGFKGDNFLLIRFHGMYQQDDRDIRAERAEQKLEPRHAMLLRCRLPGGVITTKQWQAIDKFAGENTIYGSIRLTNRQTFQFHGILKKNVKPVHQMLHSVGLDALATANDMNRNVLCTSNPYESQLHAEAYEWAKKISEHLLPRTRAYAEIWLDQEKVATTDEEPILGQTYLPRKFKTTVVIPPQNDIDLHANDMNFVAIAENGKLVGFNLLVGGGLSIEHGNKKTYARTASEFGYLPLEHTLAVAEAVVTTQRDWGNRTDRKNAKTKYTLERVGVETFKAEVERRAGIKFEPIRPYEFTGRGDRIGWVKGIDDKWHLTLFIENGRILDYPGRPLKTGLLEIAKIHKGDFRITANQNLIIAGVPESEKAKIEKIAKESGLMNAVTPQRENSMACVSFPTCPLAMAEAERFLPSFIDNIDNLMAKHGVSDEHIVMRVTGCPNGCGRAMLAEVGLVGKAPGRYNLHLGGNRIGTRIPRMYKENITEPEILASLDELIGRWAKEREAGEGFGDFTVRAGIIRPVLDPARDLWD.

The [4Fe-4S] cluster site is built by Cys-434, Cys-440, Cys-479, and Cys-483. Residue Cys-483 participates in siroheme binding.

Belongs to the nitrite and sulfite reductase 4Fe-4S domain family. As to quaternary structure, alpha(8)-beta(8). The alpha component is a flavoprotein, the beta component is a hemoprotein. Requires siroheme as cofactor. The cofactor is [4Fe-4S] cluster.

The enzyme catalyses hydrogen sulfide + 3 NADP(+) + 3 H2O = sulfite + 3 NADPH + 4 H(+). It participates in sulfur metabolism; hydrogen sulfide biosynthesis; hydrogen sulfide from sulfite (NADPH route): step 1/1. In terms of biological role, component of the sulfite reductase complex that catalyzes the 6-electron reduction of sulfite to sulfide. This is one of several activities required for the biosynthesis of L-cysteine from sulfate. This chain is Sulfite reductase [NADPH] hemoprotein beta-component, found in Escherichia coli O9:H4 (strain HS).